The sequence spans 192 residues: Ribosomal RNA small subunit methyltransferase G (192 aa).

S-adenosyl-L-methionine contacts are provided by residues Gly-59, 111–112, and Arg-124; that span reads IE.

Belongs to the methyltransferase superfamily. RNA methyltransferase RsmG family.

The protein resides in the cytoplasm. Its function is as follows. Specifically methylates the N7 position of a guanine in 16S rRNA. The chain is Ribosomal RNA small subunit methyltransferase G from Mycoplasma genitalium (strain ATCC 33530 / DSM 19775 / NCTC 10195 / G37) (Mycoplasmoides genitalium).